Reading from the N-terminus, the 314-residue chain is Homoserine O-succinyltransferase (314 aa).

The Acyl-thioester intermediate role is filled by cysteine 142. Lysine 163 and serine 192 together coordinate substrate. Histidine 235 acts as the Proton acceptor in catalysis. The active site involves glutamate 237. Arginine 249 lines the substrate pocket.

It belongs to the MetA family.

It localises to the cytoplasm. The catalysed reaction is L-homoserine + succinyl-CoA = O-succinyl-L-homoserine + CoA. The protein operates within amino-acid biosynthesis; L-methionine biosynthesis via de novo pathway; O-succinyl-L-homoserine from L-homoserine: step 1/1. In terms of biological role, transfers a succinyl group from succinyl-CoA to L-homoserine, forming succinyl-L-homoserine. This chain is Homoserine O-succinyltransferase, found in Shewanella pealeana (strain ATCC 700345 / ANG-SQ1).